The primary structure comprises 413 residues: Alpha-1-antitrypsin-like protein CM55-SI (413 aa).

Positions 1 to 24 (MPSSISWGLLLLAALSCLGPGSLA) are cleaved as a signal peptide. A Pyrrolidone carboxylic acid modification is found at Q25. N-linked (GlcNAc...) asparagine glycosylation is found at N65, N102, N165, and N266. The tract at residues 368-387 (GGTVLGNIRSILRYEVIFDR) is RCL.

It belongs to the serpin family. In terms of tissue distribution, expressed in liver.

The protein is Alpha-1-antitrypsin-like protein CM55-SI of Tamias sibiricus (Siberian chipmunk).